The primary structure comprises 159 residues: UPF0260 protein Avi_1324 (159 aa).

Belongs to the UPF0260 family.

The sequence is that of UPF0260 protein Avi_1324 from Allorhizobium ampelinum (strain ATCC BAA-846 / DSM 112012 / S4) (Agrobacterium vitis (strain S4)).